A 604-amino-acid chain; its full sequence is Glutamine--fructose-6-phosphate aminotransferase [isomerizing] (604 aa).

Cys2 serves as the catalytic Nucleophile; for GATase activity. Positions Cys2–Glu216 constitute a Glutamine amidotransferase type-2 domain. 2 consecutive SIS domains span residues Leu281–Ala420 and Val453–Pro594. Residue Lys599 is the For Fru-6P isomerization activity of the active site.

As to quaternary structure, homodimer.

Its subcellular location is the cytoplasm. It catalyses the reaction D-fructose 6-phosphate + L-glutamine = D-glucosamine 6-phosphate + L-glutamate. In terms of biological role, catalyzes the first step in hexosamine metabolism, converting fructose-6P into glucosamine-6P using glutamine as a nitrogen source. The protein is Glutamine--fructose-6-phosphate aminotransferase [isomerizing] of Thermus thermophilus (strain ATCC 27634 / DSM 579 / HB8).